The following is a 965-amino-acid chain: Glycine dehydrogenase (decarboxylating) (965 aa).

Position 711 is an N6-(pyridoxal phosphate)lysine (Lys-711).

Belongs to the GcvP family. The glycine cleavage system is composed of four proteins: P, T, L and H. The cofactor is pyridoxal 5'-phosphate.

It carries out the reaction N(6)-[(R)-lipoyl]-L-lysyl-[glycine-cleavage complex H protein] + glycine + H(+) = N(6)-[(R)-S(8)-aminomethyldihydrolipoyl]-L-lysyl-[glycine-cleavage complex H protein] + CO2. Its function is as follows. The glycine cleavage system catalyzes the degradation of glycine. The P protein binds the alpha-amino group of glycine through its pyridoxal phosphate cofactor; CO(2) is released and the remaining methylamine moiety is then transferred to the lipoamide cofactor of the H protein. The sequence is that of Glycine dehydrogenase (decarboxylating) from Psychrobacter arcticus (strain DSM 17307 / VKM B-2377 / 273-4).